A 334-amino-acid polypeptide reads, in one-letter code: Holliday junction branch migration complex subunit RuvB (334 aa).

Residues 4–186 (ADRLIAPENP…FGITQRLEYY (183 aa)) form a large ATPase domain (RuvB-L) region. Residues Ile-25, Arg-26, Gly-67, Lys-70, Thr-71, Thr-72, 133–135 (EDY), Arg-176, Tyr-186, and Arg-223 each bind ATP. Thr-71 serves as a coordination point for Mg(2+). The segment at 187–257 (KVQDLQNIVQ…VADKALNMLD (71 aa)) is small ATPAse domain (RuvB-S). The interval 260 to 334 (AQGFDYMDRK…RAYLHFGIEK (75 aa)) is head domain (RuvB-H). DNA contacts are provided by Arg-315 and Arg-320.

It belongs to the RuvB family. In terms of assembly, homohexamer. Forms an RuvA(8)-RuvB(12)-Holliday junction (HJ) complex. HJ DNA is sandwiched between 2 RuvA tetramers; dsDNA enters through RuvA and exits via RuvB. An RuvB hexamer assembles on each DNA strand where it exits the tetramer. Each RuvB hexamer is contacted by two RuvA subunits (via domain III) on 2 adjacent RuvB subunits; this complex drives branch migration. In the full resolvosome a probable DNA-RuvA(4)-RuvB(12)-RuvC(2) complex forms which resolves the HJ.

It localises to the cytoplasm. The enzyme catalyses ATP + H2O = ADP + phosphate + H(+). Its function is as follows. The RuvA-RuvB-RuvC complex processes Holliday junction (HJ) DNA during genetic recombination and DNA repair, while the RuvA-RuvB complex plays an important role in the rescue of blocked DNA replication forks via replication fork reversal (RFR). RuvA specifically binds to HJ cruciform DNA, conferring on it an open structure. The RuvB hexamer acts as an ATP-dependent pump, pulling dsDNA into and through the RuvAB complex. RuvB forms 2 homohexamers on either side of HJ DNA bound by 1 or 2 RuvA tetramers; 4 subunits per hexamer contact DNA at a time. Coordinated motions by a converter formed by DNA-disengaged RuvB subunits stimulates ATP hydrolysis and nucleotide exchange. Immobilization of the converter enables RuvB to convert the ATP-contained energy into a lever motion, pulling 2 nucleotides of DNA out of the RuvA tetramer per ATP hydrolyzed, thus driving DNA branch migration. The RuvB motors rotate together with the DNA substrate, which together with the progressing nucleotide cycle form the mechanistic basis for DNA recombination by continuous HJ branch migration. Branch migration allows RuvC to scan DNA until it finds its consensus sequence, where it cleaves and resolves cruciform DNA. In Vibrio parahaemolyticus serotype O3:K6 (strain RIMD 2210633), this protein is Holliday junction branch migration complex subunit RuvB.